Consider the following 602-residue polypeptide: Elongation factor 4 (602 aa).

Positions 2–184 (NHIRNFSIIA…AVVAKVPPPK (183 aa)) constitute a tr-type G domain. Residues 14–19 (DHGKST) and 131–134 (NKMD) each bind GTP.

The protein belongs to the TRAFAC class translation factor GTPase superfamily. Classic translation factor GTPase family. LepA subfamily.

It is found in the cell inner membrane. The catalysed reaction is GTP + H2O = GDP + phosphate + H(+). Required for accurate and efficient protein synthesis under certain stress conditions. May act as a fidelity factor of the translation reaction, by catalyzing a one-codon backward translocation of tRNAs on improperly translocated ribosomes. Back-translocation proceeds from a post-translocation (POST) complex to a pre-translocation (PRE) complex, thus giving elongation factor G a second chance to translocate the tRNAs correctly. Binds to ribosomes in a GTP-dependent manner. The protein is Elongation factor 4 of Delftia acidovorans (strain DSM 14801 / SPH-1).